A 339-amino-acid chain; its full sequence is Bifunctional phosphoglucose/phosphomannose isomerase (339 aa).

In terms of domain architecture, SIS spans 22-164 (ISVNVKAEDI…IEPVDDQIEE (143 aa)). Residues glycine 41, serine 42, serine 83, serine 85, threonine 88, and arginine 135 each coordinate D-fructose 6-phosphate. Glutamate 221 serves as the catalytic Proton acceptor. The D-fructose 6-phosphate site is built by histidine 237 and lysine 331. Histidine 237 (proton donor) is an active-site residue. Catalysis depends on lysine 331, which acts as the Proton acceptor.

It belongs to the PGI/PMI family. Homodimer.

It catalyses the reaction alpha-D-glucose 6-phosphate = beta-D-fructose 6-phosphate. It carries out the reaction D-mannose 6-phosphate = D-fructose 6-phosphate. Its function is as follows. Dual specificity isomerase that catalyzes the isomerization of both glucose-6-phosphate and mannose-6-phosphate to fructose-6-phosphate. The polypeptide is Bifunctional phosphoglucose/phosphomannose isomerase (Caldicellulosiruptor bescii (strain ATCC BAA-1888 / DSM 6725 / KCTC 15123 / Z-1320) (Anaerocellum thermophilum)).